Consider the following 4834-residue polypeptide: E3 ubiquitin-protein ligase HERC2 (4834 aa).

Positions 50–88 (TESTQNGELPPRKDDSVEPSGTKKEDLNDKEKKDEEETP) are disordered. Over residues 59–84 (PPRKDDSVEPSGTKKEDLNDKEKKDE) the composition is skewed to basic and acidic residues. Position 272 is a phosphothreonine (T272). The stretch at 415–461 (PTSHKGSLQEVIGWGLIGWKYYANVIGPIQCEGLANLGVTQIACAEK) is one RCC1 1-1 repeat. The stretch at 462–512 (RFLILSRNGRVYTQAYNSDTLAPQLVQGLASRNIVKIAAHSDGHHYLALAA) is one RCC1 1-2 repeat. An RCC1 1-3 repeat occupies 513-568 (TGEVYSWGCGDGGRLGHGDTVPLEEPKVISAFSGKQAGKHVVHIACGSTYSAAITA). The RCC1 1-4 repeat unit spans residues 569-620 (EGELYTWGRGNYGRLGHGSSEDEAIPMLVAGLKGLKVIDVACGSGDAQTLAV). One copy of the RCC1 1-5 repeat lies at 623-674 (NGQVWSWGDGDYGKLGRGGSDGCKTPKLIEKLQDLDVVKVRCGSQFSIALTK). Position 647 is a phosphothreonine (T647). One copy of the RCC1 1-6 repeat lies at 675-726 (DGQVYSWGKGDNQRLGHGTEEHVRYPKLLEGLQGKKVIDVAAGSTHCLALTE). The RCC1 1-7 repeat unit spans residues 728–778 (SEVHSWGSNDQCQHFDTLRVTKPEPAALPGLDTKHIVGIACGPAQSFAWSS). Residues 948 to 980 (LHAAITAEIQDIEAKKEAQKEKEIDEQEANAST) are a coiled coil. The Cytochrome b5 heme-binding domain maps to 1207–1283 (VTLIRKADLE…MHAFCVGQYL (77 aa)). The tract at residues 1555 to 1575 (RKKRVPKKPESTDDEEKIGNE) is disordered. A compositionally biased stretch (acidic residues) spans 1566 to 1575 (TDDEEKIGNE). Position 1577 is a phosphoserine (S1577). Residues 1859–1932 (SGPELAAMMK…KYDLKLAELP (74 aa)) enclose the MIB/HERC2 domain. Positions 1933–1958 (AAAQPSAEDSDTEDDSEAEQTERNIH) are disordered. The span at 1940–1951 (EDSDTEDDSEAE) shows a compositional bias: acidic residues. S1942 carries the phosphoserine modification. The residue at position 1944 (T1944) is a Phosphothreonine. Position 2454 is a phosphoserine (S2454). The region spanning 2554 to 2630 (RADFLSNDDY…RYIHVELIGY (77 aa)) is the CPH domain. A ZZ-type zinc finger spans residues 2703-2755 (HPGVTCDGCQMFPINGSRFKCRNCDDFDFCETCFKTKKHNTRHTFGRINEPGQ). Zn(2+)-binding residues include C2708, C2711, C2723, C2726, C2732, C2735, H2741, and H2745. One can recognise a DOC domain in the interval 2759–2936 (FCGRSGKQLK…ASDNEEEEDE (178 aa)). Position 2928 is a phosphoserine (S2928). One copy of the RCC1 2-1 repeat lies at 2958 to 3009 (RTKVFVWGLNDKDQLGGLKGSKIKVPSFSETLSALNVVQVAGGSKSLFAVTV). An RCC1 2-2 repeat occupies 3010 to 3064 (EGKVYACGEATNGRLGLGISSGTVPIPRQITALSSYVVKKVAVHSGGRHATALTV). Residues 3065-3116 (DGKVFSWGEGDDGKLGHFSRMNCDKPRLIEALKTKRIRDIACGSSHSAALTS) form an RCC1 2-3 repeat. Residues 3118–3168 (GELYTWGLGEYGRLGHGDNTTQLKPKMVKVLLGHRVIQVACGSRDAQTLAL) form an RCC1 2-4 repeat. Residues 3171-3222 (EGLVFSWGDGDFGKLGRGGSEGCNIPQNIERLNGQGVCQIECGAQFSLALTK) form an RCC1 2-5 repeat. Residues 3224–3274 (GVVWTWGKGDYFRLGHGSDVHVRKPQVVEGLRGKKIVHVAVGALHCLAVTD) form an RCC1 2-6 repeat. One copy of the RCC1 2-7 repeat lies at 3275–3326 (SGQVYAWGDNDHGQQGNGTTTVNRKPTLVQGLEGQKITRVACGSSHSVAWTT). 2 stretches are compositionally biased toward polar residues: residues 3602 to 3611 (SQSGRLSSQP) and 3618 to 3629 (HPYTDDTSTSGT). A disordered region spans residues 3602 to 3629 (SQSGRLSSQPVVVESSHPYTDDTSTSGT). Residues 3951–4002 (SGTIYGWGHNHRGQLGGIEGAKVKVPTPCEALATLRPVQLIGGEQTLFAVTA) form an RCC1 3-1 repeat. The RCC1 3-2 repeat unit spans residues 4004–4056 (GKLYATGYGAGGRLGIGGTESVSTPTLLESIQHVFIKKVAVNSGGKHCLALSS). An RCC1 3-3 repeat occupies 4058–4108 (GEVYSWGEAEDGKLGHGNRSPCDRPRVIESLRGIEVVDVAAGGAHSACVTA). Residues 4110–4162 (GDLYTWGKGRYGRLGHSDSEDQLKPKLVEALQGHRVVDIACGSGDAQTLCLTD) form an RCC1 3-4 repeat. One copy of the RCC1 3-5 repeat lies at 4164–4214 (DTVWSWGDGDYGKLGRGGSDGCKVPMKIDSLTGLGVVKVECGSQFSVALTK). Residues 4216–4266 (GAVYTWGKGDYHRLGHGSDDHVRRPRQVQGLQGKKVIAIATGSLHCVCCTE) form an RCC1 3-6 repeat. The RCC1 3-7 repeat unit spans residues 4268 to 4318 (GEVYTWGDNDEGQLGDGTTNAIQRPRLVAALQGKKVNRVACGSAHTLAWST). In terms of domain architecture, HECT spans 4457–4794 (DSLLLPHRVW…IHFCKSIDTD (338 aa)). C4762 serves as the catalytic Glycyl thioester intermediate. Residues 4804-4834 (EPAADDSSDDSDNEDVDSFASDSTQDYLTGH) are disordered. A compositionally biased stretch (acidic residues) spans 4806–4820 (AADDSSDDSDNEDVD). A phosphoserine mark is found at S4810, S4811, and S4814. The segment covering 4823-4834 (ASDSTQDYLTGH) has biased composition (polar residues). Position 4827 is a phosphothreonine (T4827).

Interacts (when phosphorylated at Thr-4827 and sumoylated) with RNF8 (via FHA domain); this interaction increases after ionizing radiation (IR) treatment. Interacts with XPA. Interacts with NEURL4. Via its interaction with NEURL4, may indirectly interact with CCP110 and CEP97. Post-translationally, phosphorylation at Thr-4827 is required for interaction with RNF8. Sumoylated with SUMO1 by PIAS4 in response to double-strand breaks (DSBs), promoting the interaction with RNF8.

It localises to the cytoplasm. The protein localises to the cytoskeleton. The protein resides in the microtubule organizing center. It is found in the centrosome. Its subcellular location is the centriole. It localises to the nucleus. It catalyses the reaction S-ubiquitinyl-[E2 ubiquitin-conjugating enzyme]-L-cysteine + [acceptor protein]-L-lysine = [E2 ubiquitin-conjugating enzyme]-L-cysteine + N(6)-ubiquitinyl-[acceptor protein]-L-lysine.. The protein operates within protein modification; protein ubiquitination. E3 ubiquitin-protein ligase that regulates ubiquitin-dependent retention of repair proteins on damaged chromosomes. Recruited to sites of DNA damage in response to ionizing radiation (IR) and facilitates the assembly of UBE2N and RNF8 promoting DNA damage-induced formation of 'Lys-63'-linked ubiquitin chains. Acts as a mediator of binding specificity between UBE2N and RNF8. Involved in the maintenance of RNF168 levels. E3 ubiquitin-protein ligase that promotes the ubiquitination and proteasomal degradation of XPA which influences the circadian oscillation of DNA excision repair activity. By controlling the steady-state expression of the IGF1R receptor, indirectly regulates the insulin-like growth factor receptor signaling pathway. Also modulates iron metabolism by regulating the basal turnover of FBXL5. In Homo sapiens (Human), this protein is E3 ubiquitin-protein ligase HERC2.